The sequence spans 489 residues: 2-(3-amino-3-carboxypropyl)histidine synthase subunit 2 (489 aa).

M1 carries the post-translational modification N-acetylmethionine. S7 carries the phosphoserine modification. 3 residues coordinate [4Fe-4S] cluster: C89, C110, and C341. Position 435 is a phosphothreonine (T435). A phosphoserine mark is found at S446 and S456. T467 carries the post-translational modification Phosphothreonine. S488 is subject to Phosphoserine.

This sequence belongs to the DPH1/DPH2 family. DPH2 subfamily. In terms of assembly, component of the 2-(3-amino-3-carboxypropyl)histidine synthase complex composed of DPH1, DPH2, DPH3 and a NADH-dependent reductase. Interacts with DPH1. [4Fe-4S] cluster serves as cofactor.

Its pathway is protein modification; peptidyl-diphthamide biosynthesis. Functionally, required for the first step of diphthamide biosynthesis, a post-translational modification of histidine which occurs in elongation factor 2. DPH1 and DPH2 transfer a 3-amino-3-carboxypropyl (ACP) group from S-adenosyl-L-methionine (SAM) to a histidine residue, the reaction is assisted by a reduction system comprising DPH3 and a NADH-dependent reductase. Facilitates the reduction of the catalytic iron-sulfur cluster found in the DPH1 subunit. The sequence is that of 2-(3-amino-3-carboxypropyl)histidine synthase subunit 2 (DPH2) from Pongo abelii (Sumatran orangutan).